A 228-amino-acid chain; its full sequence is Probable C4-dicarboxylate response regulator DctR (228 aa).

Residues 7–123 enclose the Response regulatory domain; sequence TVLLIEDDPM…RMKQALEQYR (117 aa). A 4-aspartylphosphate modification is found at Asp-58. Residues 180-199 constitute a DNA-binding region (H-T-H motif); it reads AEEVADGVGIARVTARRYLE.

Phosphorylated by DctS.

It localises to the cytoplasm. Its function is as follows. Member of the two-component regulatory system DctS/DctR. Essential for expression of DctP. The chain is Probable C4-dicarboxylate response regulator DctR (dctR) from Priestia megaterium (Bacillus megaterium).